A 319-amino-acid chain; its full sequence is Thioredoxin reductase (319 aa).

Residue 36–48 (EGFMAGGVAAGGQ) coordinates FAD. Cysteine 144 and cysteine 147 are oxidised to a cystine. Position 289–298 (289–298 (DVQDKVYRQA)) interacts with FAD.

This sequence belongs to the class-II pyridine nucleotide-disulfide oxidoreductase family. Homodimer. FAD serves as cofactor.

The catalysed reaction is [thioredoxin]-dithiol + NADP(+) = [thioredoxin]-disulfide + NADPH + H(+). The polypeptide is Thioredoxin reductase (trrA) (Dictyostelium discoideum (Social amoeba)).